A 211-amino-acid polypeptide reads, in one-letter code: Probable endopeptidase cgR_2070 (211 aa).

An N-terminal signal peptide occupies residues 1–35 (MGKHRRNNSNATRKAVAASAVALGATAAIASPAQA). Residues 97 to 211 (ASTGQAIVDA…YMPFHSAVRF (115 aa)) form the NlpC/P60 domain. Cys-127 serves as the catalytic Nucleophile. His-175 acts as the Proton acceptor in catalysis. The active site involves His-187.

Belongs to the peptidase C40 family.

It localises to the secreted. The protein is Probable endopeptidase cgR_2070 of Corynebacterium glutamicum (strain R).